Reading from the N-terminus, the 214-residue chain is Adenylate kinase (214 aa).

Residue 10 to 15 participates in ATP binding; sequence GVGKGT. An NMP region spans residues 30-59; that stretch reads STGDILRAAVKELTPMGAKAKGYMDSGALV. AMP is bound by residues T31, R36, 57–59, 85–88, and Q92; these read ALV and GFPR. An LID region spans residues 126–163; the sequence is GRRACANCGAGYHVDFAPSKVAGVCDACSGQLVQREDD. ATP is bound at residue R127. Zn(2+) contacts are provided by C130, C133, C150, and C153. Residues R160 and R171 each coordinate AMP. G199 contributes to the ATP binding site.

It belongs to the adenylate kinase family. In terms of assembly, monomer.

The protein localises to the cytoplasm. The catalysed reaction is AMP + ATP = 2 ADP. The protein operates within purine metabolism; AMP biosynthesis via salvage pathway; AMP from ADP: step 1/1. Functionally, catalyzes the reversible transfer of the terminal phosphate group between ATP and AMP. Plays an important role in cellular energy homeostasis and in adenine nucleotide metabolism. This Geobacter sp. (strain M21) protein is Adenylate kinase.